The following is a 428-amino-acid chain: 3-phosphoshikimate 1-carboxyvinyltransferase (428 aa).

The 3-phosphoshikimate site is built by Lys-22, Ser-23, and Arg-27. Lys-22 lines the phosphoenolpyruvate pocket. Phosphoenolpyruvate is bound by residues Gly-96 and Arg-124. Residues Ser-169, Ser-170, Gln-171, Ser-197, Asp-313, Asn-336, and Lys-340 each coordinate 3-phosphoshikimate. Gln-171 is a phosphoenolpyruvate binding site. Asp-313 serves as the catalytic Proton acceptor. Phosphoenolpyruvate-binding residues include Arg-344, Arg-386, and Lys-411.

Belongs to the EPSP synthase family. As to quaternary structure, monomer.

The protein resides in the cytoplasm. It catalyses the reaction 3-phosphoshikimate + phosphoenolpyruvate = 5-O-(1-carboxyvinyl)-3-phosphoshikimate + phosphate. It functions in the pathway metabolic intermediate biosynthesis; chorismate biosynthesis; chorismate from D-erythrose 4-phosphate and phosphoenolpyruvate: step 6/7. In terms of biological role, catalyzes the transfer of the enolpyruvyl moiety of phosphoenolpyruvate (PEP) to the 5-hydroxyl of shikimate-3-phosphate (S3P) to produce enolpyruvyl shikimate-3-phosphate and inorganic phosphate. This chain is 3-phosphoshikimate 1-carboxyvinyltransferase, found in Photorhabdus laumondii subsp. laumondii (strain DSM 15139 / CIP 105565 / TT01) (Photorhabdus luminescens subsp. laumondii).